The sequence spans 355 residues: Peptide chain release factor 1 (355 aa).

Gln-231 carries the N5-methylglutamine modification. Basic and acidic residues predominate over residues 283–292 (IAKETSERKS). The interval 283-303 (IAKETSERKSQVGTGDRSGRI) is disordered.

The protein belongs to the prokaryotic/mitochondrial release factor family. In terms of processing, methylated by PrmC. Methylation increases the termination efficiency of RF1.

The protein localises to the cytoplasm. Functionally, peptide chain release factor 1 directs the termination of translation in response to the peptide chain termination codons UAG and UAA. The polypeptide is Peptide chain release factor 1 (Campylobacter curvus (strain 525.92)).